The chain runs to 171 residues: Odorant-binding protein 1b (171 aa).

The N-terminal stretch at 1–19 (MMVKFLLLALVFGLAHVHA) is a signal peptide. Cystine bridges form between C57/C61 and C76/C169.

This sequence belongs to the calycin superfamily. Lipocalin family. May form a heterodimer with OBP1A. The N-terminus may be blocked. In terms of tissue distribution, expressed in nasal mucosa (at protein level). Specifically detected in septal and lateral nasal glands.

The protein localises to the secreted. Binds the chemical odorant 2-isobutyl-3-methoxypyrazine. This Mus musculus (Mouse) protein is Odorant-binding protein 1b.